A 934-amino-acid polypeptide reads, in one-letter code: Desmocollin 2-like protein (934 aa).

Cadherin domains follow at residues 167 to 274 (RWRP…APEF), 274 to 381 (FTGN…PPTF), 382 to 494 (KEKL…GPEF), and 495 to 600 (NPNI…IPVI). Residues 167–716 (RWRPLPFSVV…SASVSLGNYG (550 aa)) are Extracellular-facing. N-linked (GlcNAc...) asparagine glycosylation is found at Asn197, Asn296, and Asn316. N-linked (GlcNAc...) asparagine glycans are attached at residues Asn509, Asn565, and Asn569. The chain crosses the membrane as a helical span at residues 717–737 (ILALVLSGLLLLLLCLFLIFF). Topologically, residues 738–934 (CTTKRDKLQI…ICYTTNKTGK (197 aa)) are cytoplasmic.

As to expression, expressed at low levels in the brain and heart.

It localises to the cell junction. The protein localises to the desmosome. Its subcellular location is the cell membrane. In terms of biological role, a component of desmosome cell-cell junctions which are required for positive regulation of cellular adhesion. Involved in the interaction of plaque proteins and intermediate filaments mediating cell-cell adhesion. Involved in the formation and structural organization of desmosome cell-cell junctions during embryonic development. Required for embryogenesis, specifically for progression of epiboly and normal convergence-extension movements during gastrulation. Required for the development of desmosomal-rich midlines in the heart. Plays an important role in ventricular contraction and resulting heart stroke volume. In Danio rerio (Zebrafish), this protein is Desmocollin 2-like protein.